We begin with the raw amino-acid sequence, 396 residues long: Phosphoglycerate kinase (396 aa).

Residues 21–23, R36, 59–62, R118, and R151 each bind substrate; these read DIN and HFGR. Residues K201, E323, and 353-356 contribute to the ATP site; that span reads GGDT.

This sequence belongs to the phosphoglycerate kinase family. Monomer.

The protein localises to the cytoplasm. The catalysed reaction is (2R)-3-phosphoglycerate + ATP = (2R)-3-phospho-glyceroyl phosphate + ADP. It participates in carbohydrate degradation; glycolysis; pyruvate from D-glyceraldehyde 3-phosphate: step 2/5. This Ruegeria sp. (strain TM1040) (Silicibacter sp.) protein is Phosphoglycerate kinase.